A 296-amino-acid chain; its full sequence is HVA22-like protein i (296 aa).

The tract at residues 146-296 is disordered; that stretch reads STPRPQPPQK…LRKTRSEESR (151 aa). Residues 180 to 193 show a composition bias toward low complexity; the sequence is VSLSSSSSSSSSEN. Polar residues predominate over residues 223–233; it reads AGTTQIAQKSV. Over residues 251 to 261 the composition is skewed to acidic residues; the sequence is QIEEVEGEAES. Positions 270–281 are enriched in basic and acidic residues; the sequence is GPKETVMEETIR.

It belongs to the DP1 family.

This is HVA22-like protein i (HVA22I) from Arabidopsis thaliana (Mouse-ear cress).